Reading from the N-terminus, the 325-residue chain is Porphobilinogen deaminase (325 aa).

Cys253 carries the post-translational modification S-(dipyrrolylmethanemethyl)cysteine.

Belongs to the HMBS family. Dipyrromethane is required as a cofactor.

The enzyme catalyses 4 porphobilinogen + H2O = hydroxymethylbilane + 4 NH4(+). Its pathway is porphyrin-containing compound metabolism; protoporphyrin-IX biosynthesis; coproporphyrinogen-III from 5-aminolevulinate: step 2/4. In terms of biological role, tetrapolymerization of the monopyrrole PBG into the hydroxymethylbilane pre-uroporphyrinogen in several discrete steps. The polypeptide is Porphobilinogen deaminase (hemC) (Dictyostelium discoideum (Social amoeba)).